We begin with the raw amino-acid sequence, 1552 residues long: ABC multidrug transporter lscH (1552 aa).

The next 2 helical transmembrane spans lie at 32 to 52 (ETIL…IPII) and 68 to 88 (WFKK…VGLW). The N-linked (GlcNAc...) asparagine glycan is linked to Asn91. A run of 8 helical transmembrane segments spans residues 100 to 120 (STPS…LSTI), 158 to 178 (HSAI…MLLL), 280 to 300 (LFQI…IELA), 311 to 331 (NGYG…VSVG), 413 to 433 (AACV…VFLA), 457 to 477 (ALAS…FSVI), 500 to 520 (ILSI…FAGI), and 528 to 548 (LTIA…SPLA). The region spanning 280–559 (LFQIGFTYAQ…IVQALPQISG (280 aa)) is the ABC transmembrane type-1 1 domain. The disordered stretch occupies residues 573–655 (AEERHDPRST…PDANGDSRDA (83 aa)). A compositionally biased stretch (polar residues) spans 581-602 (STTTGTSPESNNGSQQTLSDKQ). Asn592 is a glycosylation site (N-linked (GlcNAc...) asparagine). The 246-residue stretch at 639-884 (GHLADTTPDA…AELGWADRDL (246 aa)) folds into the ABC transporter 1 domain. Residue 676-683 (GPVGCGKS) participates in ATP binding. Asn719 and Asn834 each carry an N-linked (GlcNAc...) asparagine glycan. A compositionally biased stretch (basic and acidic residues) spans 887-912 (QQEKPGKDELNHEHGEYSESAPEKLR). The disordered stretch occupies residues 887–917 (QQEKPGKDELNHEHGEYSESAPEKLRRSQTN). Transmembrane regions (helical) follow at residues 957-977 (GWLT…CDSF) and 1005-1025 (AVLG…LFII). The 279-residue stretch at 963-1241 (IFVIAICVYA…ATITSWVTLE (279 aa)) folds into the ABC transmembrane type-1 2 domain. Residue Asn1028 is glycosylated (N-linked (GlcNAc...) asparagine). 4 consecutive transmembrane segments (helical) span residues 1076–1096 (AALG…LVCV), 1100–1120 (YMAA…HFYL), 1184–1204 (WITF…IVLT), and 1210–1230 (AIGP…SATM). In terms of domain architecture, ABC transporter 2 spans 1295–1538 (IELDNVTASY…PTSIFKELYL (244 aa)). 2 N-linked (GlcNAc...) asparagine glycosylation sites follow: Asn1299 and Asn1313. 1328 to 1335 (GRTGSGKS) contacts ATP.

Belongs to the ABC transporter superfamily. ABCC family. Conjugate transporter (TC 3.A.1.208) subfamily.

Its subcellular location is the cell membrane. ABC multidrug transporter; part of the gene cluster that mediates the biosynthesis of the lipopeptide antibiotics leucinostatins that show extensive biological activities, including antimalarial, antiviral, antibacterial, antifungal, and antitumor activities, as well as phytotoxic. May be involved in the efflux of leucinostatins. The polypeptide is ABC multidrug transporter lscH (Purpureocillium lilacinum (Paecilomyces lilacinus)).